Here is a 199-residue protein sequence, read N- to C-terminus: Charged multivesicular body protein 1B1 (199 aa).

A coiled-coil region spans residues 10 to 48 (NLKFAAKELNRSSKKCDKEEKAEKAKIKKAIQKGNMEVA). The interval 132-156 (MEDTMSSTTTLTTPQNQVDMLLQEM) is interaction with IST1. The interval 167-199 (ELPQGQTGSVGTSVASAEQDELSQRLARLRDQV) is disordered. A compositionally biased stretch (polar residues) spans 170-182 (QGQTGSVGTSVAS). The tract at residues 174–199 (GSVGTSVASAEQDELSQRLARLRDQV) is interaction with SPAST. Residues 178–199 (TSVASAEQDELSQRLARLRDQV) are a coiled coil. Residues 180 to 196 (VASAEQDELSQRLARLR) form an interaction with VPS4A, MITD1 and STAMBP region. Positions 180–199 (VASAEQDELSQRLARLRDQV) are interaction with VTA1. The interaction with VPS4B stretch occupies residues 183–199 (AEQDELSQRLARLRDQV). The short motif at 186-196 (DELSQRLARLR) is the MIT-interacting motif element.

This sequence belongs to the SNF7 family. Probable peripherally associated component of the endosomal sorting required for transport complex III (ESCRT-III). ESCRT-III components are thought to multimerize to form a flat lattice on the perimeter membrane of the endosome. Several assembly forms of ESCRT-III may exist that interact and act sequentially. Interacts with CHMP1A. Interacts with VTA1; the interaction probably involves the open conformation of CHMP1B. Interacts with CHMP2A. Interacts with VPS4A; the interaction is direct. Interacts with VPS4B; the interaction is direct. Interacts with SPAST (via MIT domain); the interaction is direct. Interacts with IST1. Interacts with MITD1. Interacts with STAMBP.

Its subcellular location is the cytoplasm. The protein localises to the cytosol. The protein resides in the endosome. It localises to the late endosome membrane. In terms of biological role, probable peripherally associated component of the endosomal sorting required for transport complex III (ESCRT-III) which is involved in multivesicular bodies (MVBs) formation and sorting of endosomal cargo proteins into MVBs. MVBs contain intraluminal vesicles (ILVs) that are generated by invagination and scission from the limiting membrane of the endosome and mostly are delivered to lysosomes enabling degradation of membrane proteins, such as stimulated growth factor receptors, lysosomal enzymes and lipids. The MVB pathway appears to require the sequential function of ESCRT-O, -I,-II and -III complexes. ESCRT-III proteins mostly dissociate from the invaginating membrane before the ILV is released. The ESCRT machinery also functions in topologically equivalent membrane fission events, such as the terminal stages of cytokinesis. ESCRT-III proteins are believed to mediate the necessary vesicle extrusion and/or membrane fission activities, possibly in conjunction with the AAA ATPase VPS4. Involved in cytokinesis. Involved in recruiting VPS4A and/or VPS4B and SPAST to the midbody of dividing cells. This is Charged multivesicular body protein 1B1 from Mus musculus (Mouse).